A 530-amino-acid chain; its full sequence is Autoinducer-2 kinase (530 aa).

This sequence belongs to the FGGY kinase family.

It localises to the cytoplasm. The enzyme catalyses (S)-4,5-dihydroxypentane-2,3-dione + ATP = (2S)-2-hydroxy-3,4-dioxopentyl phosphate + ADP + H(+). Functionally, catalyzes the phosphorylation of autoinducer-2 (AI-2) to phospho-AI-2, which subsequently inactivates the transcriptional regulator LsrR and leads to the transcription of the lsr operon. Phosphorylates the ring-open form of (S)-4,5-dihydroxypentane-2,3-dione (DPD), which is the precursor to all AI-2 signaling molecules, at the C5 position. The polypeptide is Autoinducer-2 kinase (Salmonella choleraesuis (strain SC-B67)).